Reading from the N-terminus, the 160-residue chain is Large ribosomal subunit protein uL15 (160 aa).

The span at 1 to 13 (MKLHELSDNDGAA) shows a compositional bias: basic and acidic residues. The tract at residues 1-42 (MKLHELSDNDGAAKKRKRVGRGPGSGTGKMGGRGIKGQKSRS) is disordered. Residues 21–35 (RGPGSGTGKMGGRGI) are compositionally biased toward gly residues.

The protein belongs to the universal ribosomal protein uL15 family. Part of the 50S ribosomal subunit.

Functionally, binds to the 23S rRNA. The polypeptide is Large ribosomal subunit protein uL15 (Roseobacter denitrificans (strain ATCC 33942 / OCh 114) (Erythrobacter sp. (strain OCh 114))).